A 583-amino-acid chain; its full sequence is 2-succinyl-5-enolpyruvyl-6-hydroxy-3-cyclohexene-1-carboxylate synthase (583 aa).

Belongs to the TPP enzyme family. MenD subfamily. Homodimer. Requires Mg(2+) as cofactor. The cofactor is Mn(2+). Thiamine diphosphate serves as cofactor.

The enzyme catalyses isochorismate + 2-oxoglutarate + H(+) = 5-enolpyruvoyl-6-hydroxy-2-succinyl-cyclohex-3-ene-1-carboxylate + CO2. The protein operates within quinol/quinone metabolism; 1,4-dihydroxy-2-naphthoate biosynthesis; 1,4-dihydroxy-2-naphthoate from chorismate: step 2/7. Its pathway is quinol/quinone metabolism; menaquinone biosynthesis. In terms of biological role, catalyzes the thiamine diphosphate-dependent decarboxylation of 2-oxoglutarate and the subsequent addition of the resulting succinic semialdehyde-thiamine pyrophosphate anion to isochorismate to yield 2-succinyl-5-enolpyruvyl-6-hydroxy-3-cyclohexene-1-carboxylate (SEPHCHC). This is 2-succinyl-5-enolpyruvyl-6-hydroxy-3-cyclohexene-1-carboxylate synthase from Chlorobaculum parvum (strain DSM 263 / NCIMB 8327) (Chlorobium vibrioforme subsp. thiosulfatophilum).